The primary structure comprises 216 residues: 3-isopropylmalate dehydratase small subunit (216 aa).

Belongs to the LeuD family. LeuD type 1 subfamily. In terms of assembly, heterodimer of LeuC and LeuD.

The enzyme catalyses (2R,3S)-3-isopropylmalate = (2S)-2-isopropylmalate. Its pathway is amino-acid biosynthesis; L-leucine biosynthesis; L-leucine from 3-methyl-2-oxobutanoate: step 2/4. In terms of biological role, catalyzes the isomerization between 2-isopropylmalate and 3-isopropylmalate, via the formation of 2-isopropylmaleate. In Polaromonas sp. (strain JS666 / ATCC BAA-500), this protein is 3-isopropylmalate dehydratase small subunit.